We begin with the raw amino-acid sequence, 1131 residues long: Activity-dependent neuroprotector homeobox protein 2 (1131 aa).

The C2H2-type 1 zinc-finger motif lies at 73–96; it reads YCCGLCKYSTKVLTSFKNHLHRYH. The C2H2-type 2; degenerate zinc finger occupies 106-128; it reads IPCPNCVFASQPKVVGRHFRMFH. Residues Lys118 and Lys146 each participate in a glycyl lysine isopeptide (Lys-Gly) (interchain with G-Cter in SUMO2) cross-link. The C2H2-type 3; degenerate zinc finger occupies 155–178; the sequence is FTCLKCNFSNTLYYSMKKHVLVAH. A C2H2-type 4 zinc finger spans residues 215 to 240; it reads YYCKKCNANASSQDALMYHILTSDIH. The span at 274-285 shows a compositional bias: low complexity; the sequence is LAAPANGSAPSA. The tract at residues 274 to 329 is disordered; that stretch reads LAAPANGSAPSAPAQPPCFHLALPQNSPSPAAGQPVTVAQGAPGSLTHSPPAAGQS. The C2H2-type 5; degenerate zinc finger occupies 694 to 716; that stretch reads KTCPVCNELFPSNVYQVHMEVAH. The segment at 747 to 768 adopts a C2H2-type 6; degenerate zinc-finger fold; it reads VRCLSCKCLVSEEELIHHLLMH. 2 consecutive C2H2-type zinc fingers follow at residues 770 to 793 and 875 to 898; these read LGCL…RNRH and STCP…KERH. The C2H2-type 9; degenerate zinc-finger motif lies at 913–937; the sequence is FKCIHCCGVYTGNMTLAAIAVHLVR. Glycyl lysine isopeptide (Lys-Gly) (interchain with G-Cter in SUMO2) cross-links involve residues Lys979 and Lys1018. A Phosphoserine modification is found at Ser1024. A Glycyl lysine isopeptide (Lys-Gly) (interchain with G-Cter in SUMO1); alternate cross-link involves residue Lys1032. Lys1032 participates in a covalent cross-link: Glycyl lysine isopeptide (Lys-Gly) (interchain with G-Cter in SUMO2); alternate. Residues 1043–1102 constitute a DNA-binding region (homeobox); it reads PKKYEGRSYEEKKQFLKDYFHKKPYPSKKEIELLSSLFWVWKIDVASFFGKRRYICMKAI.

It belongs to the krueppel C2H2-type zinc-finger protein family. May interact with SMARCA4/BRG1.

It localises to the nucleus. May be involved in transcriptional regulation. May play a role in neuronal function; perhaps involved in protection of brain tissues from oxidative stress. May be involved in erythroid differentiation. The sequence is that of Activity-dependent neuroprotector homeobox protein 2 (ADNP2) from Homo sapiens (Human).